Consider the following 284-residue polypeptide: 3-oxoadipate:acetyl-CoA acetyltransferase (284 aa).

His-47, His-49, and Glu-229 together coordinate Zn(2+).

It belongs to the BKACE family. Zn(2+) is required as a cofactor.

It catalyses the reaction 3-oxoadipate + acetyl-CoA = acetoacetate + succinyl-CoA. In terms of biological role, catalyzes the condensation of 3-oxoadipate (beta-ketoadipate) and acetyl-CoA, forming acetoacetate and succinyl-CoA. Is likely involved is the degradation of 3-oxoadipate through an alternative pathway, within catechol degradation. The sequence is that of 3-oxoadipate:acetyl-CoA acetyltransferase from Cupriavidus necator (strain ATCC 17699 / DSM 428 / KCTC 22496 / NCIMB 10442 / H16 / Stanier 337) (Ralstonia eutropha).